We begin with the raw amino-acid sequence, 1210 residues long: ATP-dependent helicase/nuclease subunit A (1210 aa).

The UvrD-like helicase ATP-binding domain maps to 27 to 483 (QKRTAQQIEA…ILLKENFRSQ (457 aa)). 48 to 55 (ASAGSGKT) contacts ATP. Residues 512-798 (QLIAGSHAQT…NLMTIHKSKG (287 aa)) form the UvrD-like helicase C-terminal domain.

It belongs to the helicase family. AddA subfamily. As to quaternary structure, heterodimer of AddA and AddB/RexB. Mg(2+) is required as a cofactor.

The enzyme catalyses Couples ATP hydrolysis with the unwinding of duplex DNA by translocating in the 3'-5' direction.. It carries out the reaction ATP + H2O = ADP + phosphate + H(+). Functionally, the heterodimer acts as both an ATP-dependent DNA helicase and an ATP-dependent, dual-direction single-stranded exonuclease. Recognizes the chi site generating a DNA molecule suitable for the initiation of homologous recombination. The AddA nuclease domain is required for chi fragment generation; this subunit has the helicase and 3' -&gt; 5' nuclease activities. This is ATP-dependent helicase/nuclease subunit A from Streptococcus pyogenes serotype M5 (strain Manfredo).